A 411-amino-acid chain; its full sequence is Flavohemoprotein (411 aa).

The Globin domain occupies 5–142 (TLSQETKQIV…IADVFIQVEK (138 aa)). His89 is a heme b binding site. Active-site charge relay system residues include Tyr99 and Glu141. The interval 153–411 (GGWREFRSFV…FGPAGTLASS (259 aa)) is reductase. One can recognise an FAD-binding FR-type domain in the interval 156-267 (REFRSFVVEK…TAPAGDFTLQ (112 aa)). FAD-binding positions include Tyr194 and 210–213 (RQYS). 280 to 285 (GVGITP) lines the NADP(+) pocket. 401-404 (FFGP) contacts FAD.

Belongs to the globin family. Two-domain flavohemoproteins subfamily. The protein in the C-terminal section; belongs to the flavoprotein pyridine nucleotide cytochrome reductase family. Requires heme b as cofactor. The cofactor is FAD.

The enzyme catalyses 2 nitric oxide + NADPH + 2 O2 = 2 nitrate + NADP(+) + H(+). It carries out the reaction 2 nitric oxide + NADH + 2 O2 = 2 nitrate + NAD(+) + H(+). Its function is as follows. Is involved in NO detoxification in an aerobic process, termed nitric oxide dioxygenase (NOD) reaction that utilizes O(2) and NAD(P)H to convert NO to nitrate, which protects the bacterium from various noxious nitrogen compounds. Therefore, plays a central role in the inducible response to nitrosative stress. The sequence is that of Flavohemoprotein from Halalkalibacterium halodurans (strain ATCC BAA-125 / DSM 18197 / FERM 7344 / JCM 9153 / C-125) (Bacillus halodurans).